The chain runs to 133 residues: Alpha-amylase inhibitor/endochitinase (133 aa).

Glu30 acts as the Proton donor in catalysis.

Belongs to the glycosyl hydrolase 19 family. Chitinase class I subfamily.

It carries out the reaction Random endo-hydrolysis of N-acetyl-beta-D-glucosaminide (1-&gt;4)-beta-linkages in chitin and chitodextrins.. Its function is as follows. This protein functions both as an alpha-amylase inhibitor and as a chitinase. The polypeptide is Alpha-amylase inhibitor/endochitinase (Coix lacryma-jobi (Job's tears)).